The following is a 100-amino-acid chain: NADH-quinone oxidoreductase subunit K 1 (100 aa).

Transmembrane regions (helical) follow at residues Ile3 to Ile23, Leu28 to Ala48, and Ile60 to Ile80.

It belongs to the complex I subunit 4L family. NDH-1 is composed of 14 different subunits. Subunits NuoA, H, J, K, L, M, N constitute the membrane sector of the complex.

The protein localises to the cell inner membrane. The enzyme catalyses a quinone + NADH + 5 H(+)(in) = a quinol + NAD(+) + 4 H(+)(out). In terms of biological role, NDH-1 shuttles electrons from NADH, via FMN and iron-sulfur (Fe-S) centers, to quinones in the respiratory chain. The immediate electron acceptor for the enzyme in this species is believed to be ubiquinone. Couples the redox reaction to proton translocation (for every two electrons transferred, four hydrogen ions are translocated across the cytoplasmic membrane), and thus conserves the redox energy in a proton gradient. The chain is NADH-quinone oxidoreductase subunit K 1 from Aquifex aeolicus (strain VF5).